The chain runs to 202 residues: Small ribosomal subunit protein uS4c (202 aa).

The S4 RNA-binding domain maps to 90-153 (MRLDNVIFRL…KSETIISKNI (64 aa)).

The protein belongs to the universal ribosomal protein uS4 family. Part of the 30S ribosomal subunit. Contacts protein S5. The interaction surface between S4 and S5 is involved in control of translational fidelity.

The protein resides in the plastid. It localises to the chloroplast. In terms of biological role, one of the primary rRNA binding proteins, it binds directly to 16S rRNA where it nucleates assembly of the body of the 30S subunit. With S5 and S12 plays an important role in translational accuracy. This is Small ribosomal subunit protein uS4c (rps4) from Sphaerocarpos donnelli (Liverwort).